Consider the following 341-residue polypeptide: Ribulose-5-phosphate reductase 2 (341 aa).

4 residues coordinate Zn(2+): Cys38, His64, Glu65, and Glu144.

It belongs to the zinc-containing alcohol dehydrogenase family. Heterodimer together with TarI. The cofactor is Zn(2+).

It catalyses the reaction D-ribitol 5-phosphate + NADP(+) = D-ribulose 5-phosphate + NADPH + H(+). It functions in the pathway cell wall biogenesis; poly(ribitol phosphate) teichoic acid biosynthesis. Catalyzes the NADPH dependent reduction of D-ribulose 5-phosphate to D-ribitol 5-phosphate. The sequence is that of Ribulose-5-phosphate reductase 2 from Staphylococcus aureus (strain NCTC 8325 / PS 47).